Reading from the N-terminus, the 257-residue chain is uncharacterized protein (257 aa).

An N-terminal signal peptide occupies residues 1-22 (MIHSRKLRLWLYLVLLAVFIGA). The N-palmitoyl cysteine moiety is linked to residue Cys23. The S-diacylglycerol cysteine moiety is linked to residue Cys23.

Belongs to the staphylococcal tandem lipoprotein family.

It localises to the cell membrane. This is an uncharacterized protein from Staphylococcus aureus (strain Mu50 / ATCC 700699).